A 105-amino-acid polypeptide reads, in one-letter code: Endogenous retrovirus group K member 6 Rec protein (105 aa).

The disordered stretch occupies residues 1–49; it reads MNPSEMQRKAPPRRRRHRNRAPLTHKMNKMVTSEEQMKLPSTKKAEPPT. Residues 10 to 20 show a composition bias toward basic residues; it reads APPRRRRHRNR. The Nuclear localization signal signature appears at 13–20; it reads RRRRHRNR. A Nuclear export signal motif is present at residues 50-59; that stretch reads WAQLKKLTQL.

Forms homodimers, homotrimers, and homotetramers via a C-terminal domain. Associates with XPO1 and with ZNF145. As to expression, expressed at higher level in placenta, expressed at lower level in several organs and cell lines.

It localises to the cytoplasm. The protein resides in the nucleus. The protein localises to the nucleolus. Retroviral replication requires the nuclear export and translation of unspliced, singly-spliced and multiply-spliced derivatives of the initial genomic transcript. Rec interacts with a highly structured RNA element (RcRE) present in the viral 3'LTR and recruits the cellular nuclear export machinery. This permits export to the cytoplasm of unspliced genomic or incompletely spliced subgenomic viral transcripts. In Homo sapiens (Human), this protein is Endogenous retrovirus group K member 6 Rec protein (ERVK-6).